A 252-amino-acid chain; its full sequence is 5'-nucleotidase SurE (252 aa).

D8, D9, S39, and N91 together coordinate a divalent metal cation.

The protein belongs to the SurE nucleotidase family. Requires a divalent metal cation as cofactor.

It localises to the cytoplasm. It carries out the reaction a ribonucleoside 5'-phosphate + H2O = a ribonucleoside + phosphate. In terms of biological role, nucleotidase that shows phosphatase activity on nucleoside 5'-monophosphates. This is 5'-nucleotidase SurE from Legionella pneumophila (strain Corby).